The following is an 83-amino-acid chain: MKTLLLTLVVVTVVCLDLGYTRRCYNQQSSQPKTTKSCPPGENSCYNKQWRDHRGSITERGCGCPTVKPGIKLRCCESEDCNN.

An N-terminal signal peptide occupies residues 1 to 21 (MKTLLLTLVVVTVVCLDLGYT). 4 cysteine pairs are disulfide-bonded: cysteine 24–cysteine 45, cysteine 38–cysteine 62, cysteine 64–cysteine 75, and cysteine 76–cysteine 81.

Belongs to the three-finger toxin family. Short-chain subfamily. Type I alpha-neurotoxin sub-subfamily. In terms of tissue distribution, expressed by the venom gland.

The protein resides in the secreted. Its function is as follows. Binds to muscle nicotinic acetylcholine receptor (nAChR) and inhibit acetylcholine from binding to the receptor, thereby impairing neuromuscular transmission. The polypeptide is Short neurotoxin II (Laticauda colubrina (Yellow-lipped sea krait)).